The sequence spans 389 residues: Putative phosphoserine aminotransferase (389 aa).

Arg-45 contacts L-glutamate. Residues 79-80 (GT), Trp-114, Thr-169, Asp-191, and Gln-214 contribute to the pyridoxal 5'-phosphate site. N6-(pyridoxal phosphate)lysine is present on Lys-215. 265–266 (NT) is a binding site for pyridoxal 5'-phosphate.

The protein belongs to the class-V pyridoxal-phosphate-dependent aminotransferase family. SerC subfamily. Homodimer. Requires pyridoxal 5'-phosphate as cofactor.

The catalysed reaction is O-phospho-L-serine + 2-oxoglutarate = 3-phosphooxypyruvate + L-glutamate. The enzyme catalyses 4-(phosphooxy)-L-threonine + 2-oxoglutarate = (R)-3-hydroxy-2-oxo-4-phosphooxybutanoate + L-glutamate. The protein operates within amino-acid biosynthesis; L-serine biosynthesis; L-serine from 3-phospho-D-glycerate: step 2/3. It functions in the pathway cofactor biosynthesis; pyridoxine 5'-phosphate biosynthesis; pyridoxine 5'-phosphate from D-erythrose 4-phosphate: step 3/5. Its function is as follows. Catalyzes the reversible conversion of 3-phosphohydroxypyruvate to phosphoserine and of 3-hydroxy-2-oxo-4-phosphonooxybutanoate to phosphohydroxythreonine. The sequence is that of Putative phosphoserine aminotransferase from Schizosaccharomyces pombe (strain 972 / ATCC 24843) (Fission yeast).